Reading from the N-terminus, the 192-residue chain is 7-methyl-GTP pyrophosphatase (192 aa).

Aspartate 69 acts as the Proton acceptor in catalysis.

The protein belongs to the Maf family. YceF subfamily. It depends on a divalent metal cation as a cofactor.

The protein resides in the cytoplasm. The catalysed reaction is N(7)-methyl-GTP + H2O = N(7)-methyl-GMP + diphosphate + H(+). In terms of biological role, nucleoside triphosphate pyrophosphatase that hydrolyzes 7-methyl-GTP (m(7)GTP). May have a dual role in cell division arrest and in preventing the incorporation of modified nucleotides into cellular nucleic acids. The sequence is that of 7-methyl-GTP pyrophosphatase from Methylobacillus flagellatus (strain ATCC 51484 / DSM 6875 / VKM B-1610 / KT).